The chain runs to 328 residues: D-cysteine desulfhydrase (328 aa).

K51 is modified (N6-(pyridoxal phosphate)lysine).

The protein belongs to the ACC deaminase/D-cysteine desulfhydrase family. Homodimer. Requires pyridoxal 5'-phosphate as cofactor.

The enzyme catalyses D-cysteine + H2O = hydrogen sulfide + pyruvate + NH4(+) + H(+). Functionally, catalyzes the alpha,beta-elimination reaction of D-cysteine and of several D-cysteine derivatives. It could be a defense mechanism against D-cysteine. In Salmonella agona (strain SL483), this protein is D-cysteine desulfhydrase.